We begin with the raw amino-acid sequence, 161 residues long: Ribonuclease P protein component 2 (161 aa).

It belongs to the eukaryotic/archaeal RNase P protein component 2 family. In terms of assembly, consists of a catalytic RNA component and at least 4-5 protein subunits.

The protein resides in the cytoplasm. It catalyses the reaction Endonucleolytic cleavage of RNA, removing 5'-extranucleotides from tRNA precursor.. In terms of biological role, part of ribonuclease P, a protein complex that generates mature tRNA molecules by cleaving their 5'-ends. The chain is Ribonuclease P protein component 2 from Methanopyrus kandleri (strain AV19 / DSM 6324 / JCM 9639 / NBRC 100938).